A 619-amino-acid polypeptide reads, in one-letter code: Chaperone protein HscA homolog (619 aa).

It belongs to the heat shock protein 70 family.

In terms of biological role, chaperone involved in the maturation of iron-sulfur cluster-containing proteins. Has a low intrinsic ATPase activity which is markedly stimulated by HscB. The sequence is that of Chaperone protein HscA homolog from Azotobacter vinelandii.